The chain runs to 187 residues: Cytochrome b-245 chaperone 1 (187 aa).

A helical transmembrane segment spans residues 20-42; sequence GIRSWSLLVGILSIGLAAAYYSG. Residue Ser-168 is modified to Phosphoserine.

This sequence belongs to the CYBC1 family. Interacts with CYBB; CYBC1 may act as a chaperone stabilizing Cytochrome b-245 heterodimer.

It localises to the endoplasmic reticulum membrane. In terms of biological role, functions as a chaperone necessary for a stable expression of the CYBA and CYBB subunits of the cytochrome b-245 heterodimer. Controls the phagocyte respiratory burst and is essential for innate immunity. The chain is Cytochrome b-245 chaperone 1 from Bos taurus (Bovine).